A 115-amino-acid chain; its full sequence is Pancreatic progenitor cell differentiation and proliferation factor (115 aa).

Ser-9 carries the post-translational modification Phosphoserine. 2 disordered regions span residues 21–46 (LGSS…SPGL) and 73–115 (ESPE…RDLS). Positions 22–32 (GSSSSSSSGGS) are enriched in low complexity. The segment covering 106–115 (SGQTNPRDLS) has biased composition (polar residues).

This sequence belongs to the PPDPF family.

Functionally, probable regulator of exocrine pancreas development. In Mus musculus (Mouse), this protein is Pancreatic progenitor cell differentiation and proliferation factor (Ppdpf).